The primary structure comprises 248 residues: L-seryl-tRNA(Sec) kinase (248 aa).

7–14 (GLPGVGKS) contributes to the ATP binding site.

This sequence belongs to the L-seryl-tRNA(Sec) kinase family.

The catalysed reaction is L-seryl-tRNA(Sec) + ATP = O-phospho-L-seryl-tRNA(Sec) + ADP. The protein operates within aminoacyl-tRNA biosynthesis; selenocysteinyl-tRNA(Sec) biosynthesis; selenocysteinyl-tRNA(Sec) from L-seryl-tRNA(Sec) (archaeal/eukaryal route): step 1/2. Its function is as follows. Specifically phosphorylates seryl-tRNA(Sec) to O-phosphoseryl-tRNA(Sec), an activated intermediate for selenocysteine biosynthesis. This is L-seryl-tRNA(Sec) kinase (pstK) from Methanocaldococcus jannaschii (strain ATCC 43067 / DSM 2661 / JAL-1 / JCM 10045 / NBRC 100440) (Methanococcus jannaschii).